We begin with the raw amino-acid sequence, 306 residues long: Probable rRNA-processing protein EBP2 (306 aa).

The residue at position 1 (Met1) is an N-acetylmethionine. 3 disordered regions span residues Met1–Asp20, Gly75–Gln103, and Ile150–Gln169. At Thr3 the chain carries Phosphothreonine. 4 positions are modified to phosphoserine: Ser7, Ser9, Ser11, and Ser13. Positions Ser81 to Gln90 are enriched in polar residues. Positions Asp91–Gln103 are enriched in basic and acidic residues. Lys93 is covalently cross-linked (Glycyl lysine isopeptide (Lys-Gly) (interchain with G-Cter in SUMO2)). Residues Asp135–Arg171 adopt a coiled-coil conformation. Glycyl lysine isopeptide (Lys-Gly) (interchain with G-Cter in SUMO2) cross-links involve residues Lys179 and Lys218. A compositionally biased stretch (basic and acidic residues) spans Leu213–Ala224. Residues Leu213–Arg306 form a disordered region. Phosphoserine occurs at positions 264 and 270. Residues Lys274 to Arg306 show a composition bias toward basic residues.

This sequence belongs to the EBP2 family. As to quaternary structure, interacts with WDR46.

The protein localises to the nucleus. It localises to the nucleolus. Required for the processing of the 27S pre-rRNA. The chain is Probable rRNA-processing protein EBP2 (Ebna1bp2) from Mus musculus (Mouse).